The chain runs to 297 residues: Developmental pluripotency-associated protein 4 (297 aa).

Positions 1–77 are disordered; it reads MEPSGSKKGR…KVPVPPFPQH (77 aa). The span at 23–34 shows a compositional bias: low complexity; sequence SSQPSTSSAKTK. Residues 43 to 63 are compositionally biased toward basic and acidic residues; the sequence is SEKDDGCKPEEKSAQDPETPG. S211 is modified (phosphoserine).

Interacts with DPPA2. Interacts with PCGF1.

The protein resides in the nucleus. Its function is as follows. May be involved in the maintenance of active epigenetic status of target genes. May inhibit differentiation of embryonic stem (ES) cells into a primitive ectoderm lineage. This Rattus norvegicus (Rat) protein is Developmental pluripotency-associated protein 4 (Dppa4).